Reading from the N-terminus, the 432-residue chain is Anaerobic glycerol-3-phosphate dehydrogenase subunit B (432 aa).

The protein belongs to the anaerobic G-3-P dehydrogenase subunit B family. As to quaternary structure, composed of a catalytic GlpA/B dimer and of membrane bound GlpC. FMN is required as a cofactor.

It carries out the reaction a quinone + sn-glycerol 3-phosphate = dihydroxyacetone phosphate + a quinol. Its pathway is polyol metabolism; glycerol degradation via glycerol kinase pathway; glycerone phosphate from sn-glycerol 3-phosphate (anaerobic route): step 1/1. Conversion of glycerol 3-phosphate to dihydroxyacetone. Uses fumarate or nitrate as electron acceptor. This is Anaerobic glycerol-3-phosphate dehydrogenase subunit B from Haemophilus influenzae (strain PittEE).